A 236-amino-acid polypeptide reads, in one-letter code: Phosphoribosylaminoimidazole-succinocarboxamide synthase (236 aa).

Belongs to the SAICAR synthetase family.

It catalyses the reaction 5-amino-1-(5-phospho-D-ribosyl)imidazole-4-carboxylate + L-aspartate + ATP = (2S)-2-[5-amino-1-(5-phospho-beta-D-ribosyl)imidazole-4-carboxamido]succinate + ADP + phosphate + 2 H(+). The protein operates within purine metabolism; IMP biosynthesis via de novo pathway; 5-amino-1-(5-phospho-D-ribosyl)imidazole-4-carboxamide from 5-amino-1-(5-phospho-D-ribosyl)imidazole-4-carboxylate: step 1/2. This chain is Phosphoribosylaminoimidazole-succinocarboxamide synthase, found in Pseudomonas putida (strain W619).